A 239-amino-acid chain; its full sequence is Segregation and condensation protein A (239 aa).

The protein belongs to the ScpA family. In terms of assembly, component of a cohesin-like complex composed of ScpA, ScpB and the Smc homodimer, in which ScpA and ScpB bind to the head domain of Smc. The presence of the three proteins is required for the association of the complex with DNA.

The protein resides in the cytoplasm. In terms of biological role, participates in chromosomal partition during cell division. May act via the formation of a condensin-like complex containing Smc and ScpB that pull DNA away from mid-cell into both cell halves. The sequence is that of Segregation and condensation protein A from Streptococcus suis (strain 98HAH33).